Consider the following 188-residue polypeptide: dCTP deaminase (188 aa).

Residues Lys-111–Arg-116, Thr-135–Glu-137, Gln-156, Tyr-170, Lys-179, and Gln-180 each bind dCTP. Glu-137 serves as the catalytic Proton donor/acceptor.

The protein belongs to the dCTP deaminase family. In terms of assembly, homotrimer.

The catalysed reaction is dCTP + H2O + H(+) = dUTP + NH4(+). It participates in pyrimidine metabolism; dUMP biosynthesis; dUMP from dCTP (dUTP route): step 1/2. Functionally, catalyzes the deamination of dCTP to dUTP. The polypeptide is dCTP deaminase (Rickettsia canadensis (strain McKiel)).